A 967-amino-acid polypeptide reads, in one-letter code: RNA polymerase-associated protein RapA (967 aa).

One can recognise a Helicase ATP-binding domain in the interval 163–333 (EVGQRHAPRV…FARLRLLDPN (171 aa)). Residue 176 to 183 (DEVGLGKT) participates in ATP binding. The DEAH box motif lies at 279–282 (DEAH). The 189-residue stretch at 489–677 (RVEWLLNYLT…TCRQQHDSLK (189 aa)) folds into the Helicase C-terminal domain.

The protein belongs to the SNF2/RAD54 helicase family. RapA subfamily. Interacts with the RNAP. Has a higher affinity for the core RNAP than for the holoenzyme. Its ATPase activity is stimulated by binding to RNAP.

Transcription regulator that activates transcription by stimulating RNA polymerase (RNAP) recycling in case of stress conditions such as supercoiled DNA or high salt concentrations. Probably acts by releasing the RNAP, when it is trapped or immobilized on tightly supercoiled DNA. Does not activate transcription on linear DNA. Probably not involved in DNA repair. The sequence is that of RNA polymerase-associated protein RapA from Pectobacterium atrosepticum (strain SCRI 1043 / ATCC BAA-672) (Erwinia carotovora subsp. atroseptica).